The chain runs to 753 residues: 5-methyltetrahydropteroyltriglutamate--homocysteine methyltransferase (753 aa).

Residues 17–20 and K117 contribute to the 5-methyltetrahydropteroyltri-L-glutamate site; that span reads RELK. L-homocysteine-binding positions include 431 to 433 and E484; that span reads IGS. L-methionine contacts are provided by residues 431–433 and E484; that span reads IGS. Residues 515–516 and W561 each bind 5-methyltetrahydropteroyltri-L-glutamate; that span reads RC. D599 is a binding site for L-homocysteine. L-methionine is bound at residue D599. Position 605 (E605) interacts with 5-methyltetrahydropteroyltri-L-glutamate. Positions 641, 643, and 665 each coordinate Zn(2+). H694 acts as the Proton donor in catalysis. C726 is a Zn(2+) binding site.

Belongs to the vitamin-B12 independent methionine synthase family. Requires Zn(2+) as cofactor.

The enzyme catalyses 5-methyltetrahydropteroyltri-L-glutamate + L-homocysteine = tetrahydropteroyltri-L-glutamate + L-methionine. The protein operates within amino-acid biosynthesis; L-methionine biosynthesis via de novo pathway; L-methionine from L-homocysteine (MetE route): step 1/1. In terms of biological role, catalyzes the transfer of a methyl group from 5-methyltetrahydrofolate to homocysteine resulting in methionine formation. The sequence is that of 5-methyltetrahydropteroyltriglutamate--homocysteine methyltransferase from Escherichia coli O6:K15:H31 (strain 536 / UPEC).